We begin with the raw amino-acid sequence, 505 residues long: Flagellin (505 aa).

This sequence belongs to the bacterial flagellin family.

It localises to the secreted. The protein localises to the bacterial flagellum. Its function is as follows. Flagellin is the subunit protein which polymerizes to form the filaments of bacterial flagella. The polypeptide is Flagellin (fliC) (Salmonella muenchen).